The following is a 257-amino-acid chain: Small ribosomal subunit protein uS15m (257 aa).

The transit peptide at 1-57 directs the protein to the mitochondrion; it reads MLRVAWRTLSLIRTRAVTQVLVPGLPGGGSAKFPFNQWGLQPRSLLLQAARGYVVRK. The interval 225–257 is disordered; the sequence is RALKAAAAAQKQAKRRNPDSPAKAIPKTLKDSQ.

The protein belongs to the universal ribosomal protein uS15 family. In terms of assembly, component of the mitochondrial small ribosomal subunit (mt-SSU). Mature mammalian 55S mitochondrial ribosomes consist of a small (28S) and a large (39S) subunit. The 28S small subunit contains a 12S ribosomal RNA (12S mt-rRNA) and 30 different proteins. The 39S large subunit contains a 16S rRNA (16S mt-rRNA), a copy of mitochondrial valine transfer RNA (mt-tRNA(Val)), which plays an integral structural role, and 52 different proteins. Interacts with METTL17.

The protein resides in the mitochondrion matrix. The polypeptide is Small ribosomal subunit protein uS15m (MRPS15) (Homo sapiens (Human)).